Reading from the N-terminus, the 262-residue chain is Adenosylcobinamide-GDP ribazoletransferase (262 aa).

The next 6 membrane-spanning stretches (helical) occupy residues 43–63, 66–86, 120–140, 146–166, 191–211, and 242–262; these read YFGL…WLTQ, LPAG…TGGF, GALA…ELAL, AGSA…SIIF, LLIL…LAAL, and AAQQ…GNIL.

This sequence belongs to the CobS family. It depends on Mg(2+) as a cofactor.

The protein resides in the cell inner membrane. The enzyme catalyses alpha-ribazole + adenosylcob(III)inamide-GDP = adenosylcob(III)alamin + GMP + H(+). The catalysed reaction is alpha-ribazole 5'-phosphate + adenosylcob(III)inamide-GDP = adenosylcob(III)alamin 5'-phosphate + GMP + H(+). The protein operates within cofactor biosynthesis; adenosylcobalamin biosynthesis; adenosylcobalamin from cob(II)yrinate a,c-diamide: step 7/7. In terms of biological role, joins adenosylcobinamide-GDP and alpha-ribazole to generate adenosylcobalamin (Ado-cobalamin). Also synthesizes adenosylcobalamin 5'-phosphate from adenosylcobinamide-GDP and alpha-ribazole 5'-phosphate. This chain is Adenosylcobinamide-GDP ribazoletransferase, found in Shewanella baltica (strain OS195).